The primary structure comprises 888 residues: MDESALLDLLECPVCLERLDASAKVLPCQHTFCKRCLLGIVGSRNELRCPECRTLVGSGVEELPSNILLVRLLDGIKQRPWKPGPGGGSGTNCTNALRSQSSTVANCSSKDLQSSQGGQQPRVQAWSPPVRGIPQLPCAKALYNYEGKEPGDLKFSKGDIIILRRQVDENWYHGEVNGIHGFFPTNFVQIIKPLPQPPPQCKALYDFEVKDKEADKDCLPFAKDDVLTVIRRVDENWAEGMLADKIGIFPISYVEFNSAAKQLIEWDKPPVPGVDAGECSSAAAQSSTAPKHSDTKKNTKKRHSFTSLTMANKSSQASQNRHSMEISPPVLISSSNPTAAARISELSGLSCSAPSQVHISTTGLIVTPPPSSPVTTGPSFTFPSDVPYQATLGTLNPPLLPPPLLAATVLASTPPGAAAAAAAAGMGPRPMAGSTDQIAHLRPQTRPSVYVAIYPYTPRKEDELELRKGEMFLVFERCQDGWFKGTSMHTSKIGVFPGNYVAPVTRAVTNASQAKVPMSTAGQTSRGVTMVSPSTAGGPAQKLQGNGVAGSPSVVPTAVVSAAHIQTSPQAKVLLHMTGQMTVNQARNAVRTVAAHNQERPTAAVTPIQVQNAAGLSPASVGLPHHSLASPQPAPLMPGSATHTAAISISRASAPLACAAAAPLTSSSITSASLEAEPSGRIVTVLPGLPTSPDSASLACGNSSATKPDKDSKKEKKGLLKLLSGASTKRKPRVSPPASPTLEVELGSAELPLHGAVGPELPPGGGHGRAGSCPVDGDGPVTTAVAGAALAQDAFHRKASSLDSAVPIAPPPRQACSSLGPVLNESRPVVCERHRVVVSYPPQSEAELELKEGDIVFVHKKREDGWFKGTLQRNGKTGLFPGSFVENI.

Residues 12–53 form an RING-type zinc finger; the sequence is CPVCLERLDASAKVLPCQHTFCKRCLLGIVGSRNELRCPECR. SH3 domains are found at residues 134–193 and 196–259; these read PQLP…IIKP and QPPP…FNSA. Residues 275 to 321 form a disordered region; it reads DAGECSSAAAQSSTAPKHSDTKKNTKKRHSFTSLTMANKSSQASQNR. The interaction with RAC1 stretch occupies residues 292–362; the sequence is HSDTKKNTKK…APSQVHISTT (71 aa). At S304 the chain carries Phosphoserine. Residues 305-321 show a composition bias toward polar residues; it reads FTSLTMANKSSQASQNR. Residues 440–543 form an interaction with AKT2 region; the sequence is HLRPQTRPSV…STAGGPAQKL (104 aa). One can recognise an SH3 3 domain in the interval 445–506; sequence TRPSVYVAIY…PGNYVAPVTR (62 aa). Disordered stretches follow at residues 516–549, 617–637, and 693–741; these read VPMSTAGQTSRGVTMVSPSTAGGPAQKLQGNGVA, SPASVGLPHHSLASPQPAPLM, and PDSA…ASPT. Residues 520–535 are compositionally biased toward polar residues; it reads TAGQTSRGVTMVSPST. A Phosphoserine modification is found at S532. Positions 693-704 are enriched in polar residues; that stretch reads PDSASLACGNSS. The span at 707 to 718 shows a compositional bias: basic and acidic residues; sequence KPDKDSKKEKKG. The residue at position 735 (S735) is a Phosphoserine. The SH3 4 domain maps to 829 to 888; sequence VVCERHRVVVSYPPQSEAELELKEGDIVFVHKKREDGWFKGTLQRNGKTGLFPGSFVENI.

The protein belongs to the SH3RF family. As to quaternary structure, interacts with HERP1. Interacts with RAC1; in a GTP-dependent manner. Interacts with MAP3K10/MLK2 and MAP3K11/MLK3. Interacts with MAPK8IP; this interaction leads to the PJAC complex (POSH-JIP or SH3RF1/MAPK8IP apoptotic complex) with a 1:1 ratio. Interacts with SIAH1. Probably part of a signaling complex that may contain SH3RF1, MAPK8IP, DLK1, MAP2K4/MKK4, MAP2K7/MKK7, MAPK8/JNK1, MAPK9/JNK2, AKT1 and AKT2. Found in a complex with RAC2, MAP3K7/TAK1, MAP2K7/MKK7, MAPK8IP1/JIP1, MAPK8/JNK1 and MAPK9/JNK2. Found in a complex with RAC1, MAP3K11/MLK3, MAP2K7/MKK7, MAPK8IP1/JIP1 and MAPK8/JNK1. Interacts with SH3RF2. In terms of processing, phosphorylated at Ser-304 by AKT1 and AKT2. When phosphorylated, it has reduced ability to bind Rac. Autoubiquitinated. Ubiquitinated by SH3RF2, leading to proteasome-mediated degradation.

The protein resides in the cytoplasm. It is found in the perinuclear region. The protein localises to the cell projection. It localises to the lamellipodium. Its subcellular location is the golgi apparatus. The protein resides in the trans-Golgi network. It catalyses the reaction S-ubiquitinyl-[E2 ubiquitin-conjugating enzyme]-L-cysteine + [acceptor protein]-L-lysine = [E2 ubiquitin-conjugating enzyme]-L-cysteine + N(6)-ubiquitinyl-[acceptor protein]-L-lysine.. Its pathway is protein modification; protein ubiquitination. Has E3 ubiquitin-protein ligase activity. In the absence of an external substrate, it can catalyze self-ubiquitination. Stimulates ubiquitination of potassium channel KCNJ1, enhancing it's dynamin-dependent and clathrin-independent endocytosis. Acts as a scaffold protein that coordinates with MAPK8IP1/JIP1 in organizing different components of the JNK pathway, including RAC1 or RAC2, MAP3K11/MLK3 or MAP3K7/TAK1, MAP2K7/MKK7, MAPK8/JNK1 and/or MAPK9/JNK2 into a functional multiprotein complex to ensure the effective activation of the JNK signaling pathway. Regulates the differentiation of CD4(+) and CD8(+) T-cells and promotes T-helper 1 (Th1) cell differentiation. Regulates the activation of MAPK8/JNK1 and MAPK9/JNK2 in CD4(+) T-cells and the activation of MAPK8/JNK1 in CD8(+) T-cells. Controls proper cortical neuronal migration and the formation of proximal cytoplasmic dilation in the leading process (PCDLP) in migratory neocortical neurons by regulating the proper localization of activated RAC1 and F-actin assembly. The protein is E3 ubiquitin-protein ligase SH3RF1 (SH3RF1) of Pongo abelii (Sumatran orangutan).